The sequence spans 316 residues: MTMYAKNNTAGKDMLSLLEWNKEELTDIIKLAVAMKTNPAHYSHILSGKILGMIFDKPSTRTRVSFEAGILQLGGQAIVMSSKELQIGRGEPIKDTAHVMSEYIDAIMIRTFSHEKVEELAYHAEIPIINGLTDLHHPCQALADLMTIYEWKDQLEGVKLAYIGDGNNVCHSLLLAGAMVGIDICLAMPKGYEVDETILAKAENLAKQSGGKIFVTEDPKLAVTDADFIYTDVWTSMGQEDENAKRLADFGEKYQVNAELVSGAKPDYHFLHCLPAHREEEVTAEIIDGNHSVIYQQAGNRLHAQKALLAAILEAK.

Residues 59–62 (STRT), Q86, R110, and 137–140 (HPCQ) contribute to the carbamoyl phosphate site. L-ornithine-binding positions include N168, D232, and 236-237 (SM). Residues 273 to 274 (CL) and R301 each bind carbamoyl phosphate.

This sequence belongs to the aspartate/ornithine carbamoyltransferase superfamily. OTCase family.

It localises to the cytoplasm. It catalyses the reaction carbamoyl phosphate + L-ornithine = L-citrulline + phosphate + H(+). It participates in amino-acid biosynthesis; L-arginine biosynthesis; L-arginine from L-ornithine and carbamoyl phosphate: step 1/3. Reversibly catalyzes the transfer of the carbamoyl group from carbamoyl phosphate (CP) to the N(epsilon) atom of ornithine (ORN) to produce L-citrulline. The chain is Ornithine carbamoyltransferase from Listeria monocytogenes serotype 4b (strain F2365).